We begin with the raw amino-acid sequence, 340 residues long: Delta(1)-pyrroline-2-carboxylate reductase 1 (340 aa).

Ser-50 (charge relay system) is an active-site residue. His-51 acts as the Proton donor in catalysis. A substrate-binding site is contributed by Arg-55. NADP(+) is bound at residue 123-127 (HFSAL). Thr-163 contacts substrate. 181-183 (DFA) serves as a coordination point for NADP(+). 189 to 190 (RG) is a binding site for substrate. Asp-191 (charge relay system) is an active-site residue. NADP(+) contacts are provided by residues 232–233 (HK) and 307–313 (RLPSQRR).

This sequence belongs to the LDH2/MDH2 oxidoreductase family. As to quaternary structure, homodimer.

It carries out the reaction L-proline + NAD(+) = 1-pyrroline-2-carboxylate + NADH + H(+). It catalyses the reaction L-proline + NADP(+) = 1-pyrroline-2-carboxylate + NADPH + H(+). In terms of biological role, catalyzes the reduction of Delta(1)-pyrroline-2-carboxylate (Pyr2C) to L-proline, using NADPH as the electron donor. May be involved in a degradation pathway that converts trans-3-hydroxy-L-proline (t3LHyp) to L-proline. This is Delta(1)-pyrroline-2-carboxylate reductase 1 from Burkholderia ambifaria (strain ATCC BAA-244 / DSM 16087 / CCUG 44356 / LMG 19182 / AMMD) (Burkholderia cepacia (strain AMMD)).